The primary structure comprises 230 residues: Porin OmpL (230 aa).

The signal sequence occupies residues 1–20 (MKSLNTLVILTSVISTSVFA).

It belongs to the oligogalacturonate-specific porin KdgM (TC 1.B.35) family. OmpL subfamily.

It localises to the cell outer membrane. In terms of biological role, outer membrane channel protein that allows an efficient diffusion of low-molecular-weight solutes such as small sugars and tetraglycine. However, the specific substrate recognized by the OmpL channel is unknown. The chain is Porin OmpL (ompL) from Salmonella typhimurium (strain LT2 / SGSC1412 / ATCC 700720).